Consider the following 490-residue polypeptide: Ribulose bisphosphate carboxylase large chain (490 aa).

Substrate is bound by residues N127 and T177. K179 functions as the Proton acceptor in the catalytic mechanism. K181 contributes to the substrate binding site. Residues K205, D207, and E208 each coordinate Mg(2+). Residue K205 is modified to N6-carboxylysine. H297 acts as the Proton acceptor in catalysis. 3 residues coordinate substrate: R298, H330, and S382.

Belongs to the RuBisCO large chain family. Type I subfamily. Heterohexadecamer of 8 large chains and 8 small chains. It depends on Mg(2+) as a cofactor.

The protein resides in the plastid. It is found in the chloroplast. It carries out the reaction 2 (2R)-3-phosphoglycerate + 2 H(+) = D-ribulose 1,5-bisphosphate + CO2 + H2O. The catalysed reaction is D-ribulose 1,5-bisphosphate + O2 = 2-phosphoglycolate + (2R)-3-phosphoglycerate + 2 H(+). RuBisCO catalyzes two reactions: the carboxylation of D-ribulose 1,5-bisphosphate, the primary event in carbon dioxide fixation, as well as the oxidative fragmentation of the pentose substrate in the photorespiration process. Both reactions occur simultaneously and in competition at the same active site. This chain is Ribulose bisphosphate carboxylase large chain, found in Detonula confervacea (Marine diatom).